We begin with the raw amino-acid sequence, 282 residues long: Parvulin-like PPIase (282 aa).

An N-terminal signal peptide occupies residues methionine 1–cysteine 20. In terms of domain architecture, PpiC spans lysine 138 to glutamate 231.

The protein belongs to the PpiC/parvulin rotamase family.

It localises to the cell outer membrane. It catalyses the reaction [protein]-peptidylproline (omega=180) = [protein]-peptidylproline (omega=0). This Rickettsia typhi (strain ATCC VR-144 / Wilmington) protein is Parvulin-like PPIase (plp).